We begin with the raw amino-acid sequence, 142 residues long: Mediator of RNA polymerase II transcription subunit 21 (142 aa).

Positions 87 to 131 (AEEQLSRIDSLQKKLIQVEGEKIEAIKRKESLTKDIEELINEFTE) form a coiled coil.

This sequence belongs to the Mediator complex subunit 21 family. As to quaternary structure, component of the Mediator complex.

It localises to the nucleus. Its function is as follows. Component of the Mediator complex, a coactivator involved in the regulated transcription of nearly all RNA polymerase II-dependent genes. Mediator functions as a bridge to convey information from gene-specific regulatory proteins to the basal RNA polymerase II transcription machinery. Mediator is recruited to promoters by direct interactions with regulatory proteins and serves as a scaffold for the assembly of a functional preinitiation complex with RNA polymerase II and the general transcription factors. This chain is Mediator of RNA polymerase II transcription subunit 21 (SRB7), found in Eremothecium gossypii (strain ATCC 10895 / CBS 109.51 / FGSC 9923 / NRRL Y-1056) (Yeast).